We begin with the raw amino-acid sequence, 304 residues long: Solute carrier family 25 member 34 (304 aa).

3 Solcar repeats span residues 4-97 (VPPA…ACQA), 101-194 (QQPG…AKAW), and 204-295 (DSWL…LRKL). A run of 6 helical transmembrane segments spans residues 7-27 (AVDL…TNPL), 45-65 (TYPR…RADG), 98-120 (GLSQ…GAFV), 170-191 (VGGA…FASA), 206-226 (WLVA…VMTP), and 278-301 (LGPH…WGQH).

Belongs to the mitochondrial carrier (TC 2.A.29) family.

The protein resides in the mitochondrion inner membrane. It carries out the reaction a dicarboxylate(in) + sulfate(out) = a dicarboxylate(out) + sulfate(in). Putative antiporter that exchanges dicarboxylates and sulfur oxoanions across the inner membrane of mitochondria. The protein is Solute carrier family 25 member 34 (SLC25A34) of Bos taurus (Bovine).